The primary structure comprises 222 residues: Probable transaldolase (222 aa).

Residue K91 is the Schiff-base intermediate with substrate of the active site.

It belongs to the transaldolase family. Type 3B subfamily.

It localises to the cytoplasm. The enzyme catalyses D-sedoheptulose 7-phosphate + D-glyceraldehyde 3-phosphate = D-erythrose 4-phosphate + beta-D-fructose 6-phosphate. Its pathway is carbohydrate degradation; pentose phosphate pathway; D-glyceraldehyde 3-phosphate and beta-D-fructose 6-phosphate from D-ribose 5-phosphate and D-xylulose 5-phosphate (non-oxidative stage): step 2/3. Its function is as follows. Transaldolase is important for the balance of metabolites in the pentose-phosphate pathway. The chain is Probable transaldolase from Chlorobium phaeovibrioides (strain DSM 265 / 1930) (Prosthecochloris vibrioformis (strain DSM 265)).